We begin with the raw amino-acid sequence, 292 residues long: Elongation factor Ts (292 aa).

Positions 79 to 82 are involved in Mg(2+) ion dislocation from EF-Tu; it reads TDFV.

It belongs to the EF-Ts family.

The protein localises to the cytoplasm. Its function is as follows. Associates with the EF-Tu.GDP complex and induces the exchange of GDP to GTP. It remains bound to the aminoacyl-tRNA.EF-Tu.GTP complex up to the GTP hydrolysis stage on the ribosome. The chain is Elongation factor Ts from Malacoplasma penetrans (strain HF-2) (Mycoplasma penetrans).